The sequence spans 837 residues: Striatin-interacting protein 1 (837 aa).

Met1 carries the post-translational modification N-acetylmethionine. Disordered stretches follow at residues 1–67 and 333–423; these read MEPA…ESPD and AASP…KGLP. Over residues 18–35 the composition is skewed to pro residues; sequence PQPPPPPPPATAQPPPGA. The span at 36–46 shows a compositional bias: low complexity; that stretch reads PRAAAGLLPGG. Positions 47–60 are enriched in basic and acidic residues; the sequence is KAREFNRNQRKDSE. 3 positions are modified to phosphoserine: Ser59, Ser335, and Ser339. The segment covering 333 to 343 has biased composition (low complexity); it reads AASPPASASDS. The segment covering 356 to 377 has biased composition (basic and acidic residues); sequence KALIKQDNLDAFNERDPYKADD. Residues 378–391 are compositionally biased toward acidic residues; the sequence is SREEEEENDDDNSL. Residue Ser788 is modified to Phosphoserine. The tract at residues 796 to 837 is required for STRIPAK core complex formation; that stretch reads DNCLQSVLGQRVDLPEDFQMNYDLWLEREVFSKPISWEELLQ.

The protein belongs to the STRIP family. Part of the core of STRIPAK complexes composed of PP2A catalytic and scaffolding subunits, the striatins (PP2A regulatory subunits), the striatin-associated proteins MOB4, STRIP1 and STRIP2, PDCD10 and members of the STE20 kinases, such as STK24 and STK26. The STRIPAK complex can be extended by adapter proteins such as SLMAP:SIKE1, CTTNBP2 or CTTNBP2NL. Interacts with CDC42BPB. Interacts with CTTNBP2NL.

Its subcellular location is the cytoplasm. In terms of biological role, plays a role in the regulation of cell morphology and cytoskeletal organization. Required in the cortical actin filament dynamics and cell shape. Part of the striatin-interacting phosphatase and kinase (STRIPAK) complexes. STRIPAK complexes have critical roles in protein (de)phosphorylation and are regulators of multiple signaling pathways including Hippo, MAPK, nuclear receptor and cytoskeleton remodeling. Different types of STRIPAK complexes are involved in a variety of biological processes such as cell growth, differentiation, apoptosis, metabolism and immune regulation. The chain is Striatin-interacting protein 1 (STRIP1) from Pongo abelii (Sumatran orangutan).